A 454-amino-acid chain; its full sequence is Bifunctional protein GlmU (454 aa).

Residues 1-233 (MQATPRPLAL…EAETIGINSR (233 aa)) are pyrophosphorylase. UDP-N-acetyl-alpha-D-glucosamine-binding positions include 13–16 (LAAG), lysine 27, glutamine 80, 85–86 (GT), 108–110 (YGD), glycine 145, glutamate 159, asparagine 174, and asparagine 231. Aspartate 110 contacts Mg(2+). Asparagine 231 contacts Mg(2+). Positions 234–254 (AELVRAEAQFQSQRRAALIEA) are linker. Residues 255 to 454 (GVTMQAPDSV…KAIKDAKSKD (200 aa)) are N-acetyltransferase. The UDP-N-acetyl-alpha-D-glucosamine site is built by arginine 320 and lysine 338. Catalysis depends on histidine 350, which acts as the Proton acceptor. 2 residues coordinate UDP-N-acetyl-alpha-D-glucosamine: tyrosine 353 and asparagine 364. Residues alanine 367, 373–374 (NY), serine 392, serine 410, and arginine 427 each bind acetyl-CoA.

It in the N-terminal section; belongs to the N-acetylglucosamine-1-phosphate uridyltransferase family. In the C-terminal section; belongs to the transferase hexapeptide repeat family. Homotrimer. Mg(2+) serves as cofactor.

The protein localises to the cytoplasm. The enzyme catalyses alpha-D-glucosamine 1-phosphate + acetyl-CoA = N-acetyl-alpha-D-glucosamine 1-phosphate + CoA + H(+). The catalysed reaction is N-acetyl-alpha-D-glucosamine 1-phosphate + UTP + H(+) = UDP-N-acetyl-alpha-D-glucosamine + diphosphate. It participates in nucleotide-sugar biosynthesis; UDP-N-acetyl-alpha-D-glucosamine biosynthesis; N-acetyl-alpha-D-glucosamine 1-phosphate from alpha-D-glucosamine 6-phosphate (route II): step 2/2. Its pathway is nucleotide-sugar biosynthesis; UDP-N-acetyl-alpha-D-glucosamine biosynthesis; UDP-N-acetyl-alpha-D-glucosamine from N-acetyl-alpha-D-glucosamine 1-phosphate: step 1/1. The protein operates within bacterial outer membrane biogenesis; LPS lipid A biosynthesis. Functionally, catalyzes the last two sequential reactions in the de novo biosynthetic pathway for UDP-N-acetylglucosamine (UDP-GlcNAc). The C-terminal domain catalyzes the transfer of acetyl group from acetyl coenzyme A to glucosamine-1-phosphate (GlcN-1-P) to produce N-acetylglucosamine-1-phosphate (GlcNAc-1-P), which is converted into UDP-GlcNAc by the transfer of uridine 5-monophosphate (from uridine 5-triphosphate), a reaction catalyzed by the N-terminal domain. The protein is Bifunctional protein GlmU of Jannaschia sp. (strain CCS1).